The following is a 106-amino-acid chain: SH3 domain-binding glutamic acid-rich-like protein 2 (106 aa).

The SH3-binding signature appears at 61–67 (QGNPLPP).

The protein belongs to the SH3BGR family.

The protein localises to the nucleus. In Xenopus tropicalis (Western clawed frog), this protein is SH3 domain-binding glutamic acid-rich-like protein 2 (sh3bgrl2).